Here is a 203-residue protein sequence, read N- to C-terminus: Large ribosomal subunit protein uL18 (203 aa).

It belongs to the universal ribosomal protein uL18 family. Part of the 50S ribosomal subunit. Contacts the 5S and 23S rRNAs.

This is one of the proteins that bind and probably mediate the attachment of the 5S RNA into the large ribosomal subunit, where it forms part of the central protuberance. This is Large ribosomal subunit protein uL18 from Pyrococcus furiosus (strain ATCC 43587 / DSM 3638 / JCM 8422 / Vc1).